The sequence spans 346 residues: MDLDLLDLNPRIIAAIKKAKLKSVKEVLHFSGPDLKRLTNLSSPEVWHLLRTASLHLRGSSILTALQLHQQKERFPTQHQRLSLGCPVLDALLRGGLPLDGITELAGRSSAGKTQLALQLCLAVQFPRQHGGLEAGAVYICTEDAFPHKRLQQLMAQQPRLRTDVPGELLQKLRFGSQIFIEHVADVDTLLECVNKKVPVLLSRGMARLVVIDSVAAPFRCEFDSQASAPRARHLQSLGATLRELSSAFQSPVLCINQVTEAMEEQGAAHGPLGFWDERVSPALGITWANQLLVRLLADRLREEEAALGCPARTLRVLSAPHLPPSSCSYTISAEGVRGTPGTQSH.

An N-acetylmethionine modification is found at methionine 1. ATP is bound at residue 107-114 (GRSSAGKT).

It belongs to the RecA family. RAD51 subfamily. As to quaternary structure, interacts with RAD51C and RAD51. Part of the CX3 complex consisting of RAD51C and XRCC3; the complex has a ring-like structure arranged into a flat disk around a central channel; CX3 can interact with RAD51 in vitro. Forms a complex with FANCD2, BRCA2 and phosphorylated FANCG. Interacts with SWSAP1 and ZSWIM7; involved in homologous recombination repair. Interacts directly with PALB2 which may serve as a scaffold for a HR complex containing PALB2, BRCA2, RAD51C, RAD51 and XRCC3.

The protein localises to the nucleus. It is found in the cytoplasm. It localises to the perinuclear region. Its subcellular location is the mitochondrion. Its function is as follows. Involved in the homologous recombination repair (HRR) pathway of double-stranded DNA, thought to repair chromosomal fragmentation, translocations and deletions. Part of the RAD51 paralog protein complex CX3 which acts in the BRCA1-BRCA2-dependent HR pathway. Upon DNA damage, CX3 acts downstream of RAD51 recruitment; the complex binds predominantly to the intersection of the four duplex arms of the Holliday junction (HJ) and to junctions of replication forks. Involved in HJ resolution and thus in processing HR intermediates late in the DNA repair process; the function may be linked to the CX3 complex and seems to involve GEN1 during mitotic cell cycle progression. Part of a PALB2-scaffolded HR complex containing BRCA2 and RAD51C and which is thought to play a role in DNA repair by HR. Plays a role in regulating mitochondrial DNA copy number under conditions of oxidative stress in the presence of RAD51 and RAD51C. The protein is DNA repair protein XRCC3 (XRCC3) of Homo sapiens (Human).